Here is a 202-residue protein sequence, read N- to C-terminus: MSSTFTSLRGLATRLFAGGARPSPSSLLLPNKPATAALPTAIQHQQTASYASKGKSGPPAGMFSGQKAGSKKSKGPKQVDPRIINILRHFAVLSPKRIPPPLRFGRNRYLRHWTIHRAWLLFRRQQREQRERILMQQHQSMSNACEELRNTEGPGTRETGYLYRVAMLKNGVYGLKSIPIEYASRALVETPGRQAWNHEWKR.

The tract at residues 42–79 (IQHQQTASYASKGKSGPPAGMFSGQKAGSKKSKGPKQV) is disordered.

This sequence belongs to the mitochondrion-specific ribosomal protein mL40 family. Component of the mitochondrial large ribosomal subunit (mt-LSU). Mature N.crassa 74S mitochondrial ribosomes consist of a small (37S) and a large (54S) subunit. The 37S small subunit contains a 16S ribosomal RNA (16S mt-rRNA) and 32 different proteins. The 54S large subunit contains a 23S rRNA (23S mt-rRNA) and 42 different proteins. mL40 is binding to NAD.

The protein localises to the mitochondrion. In terms of biological role, component of the mitochondrial ribosome (mitoribosome), a dedicated translation machinery responsible for the synthesis of mitochondrial genome-encoded proteins, including at least some of the essential transmembrane subunits of the mitochondrial respiratory chain. The mitoribosomes are attached to the mitochondrial inner membrane and translation products are cotranslationally integrated into the membrane. This Neurospora crassa (strain ATCC 24698 / 74-OR23-1A / CBS 708.71 / DSM 1257 / FGSC 987) protein is Large ribosomal subunit protein mL40 (mrpl28).